The chain runs to 262 residues: uncharacterized protein (262 aa).

This is an uncharacterized protein from Acanthamoeba polyphaga mimivirus (APMV).